Reading from the N-terminus, the 278-residue chain is Probable aquaporin PIP2-8 (278 aa).

N-acetylmethionine is present on Met-1. At 1–36 (MSKEVSEEGRHGKDYVDPPPAPLLDMAELKLWSFYR) the chain is on the cytoplasmic side. At Lys-3 the chain carries N6,N6-dimethyllysine. The chain crosses the membrane as a helical span at residues 37–57 (AIIAEFIATLLFLYVTVATVI). Topologically, residues 58-74 (GHKNQTGPCGGVGLLGI) are extracellular. Residues 75–95 (AWAFGGMIFVLVYCTAGISGG) form a helical membrane-spanning segment. The Cytoplasmic portion of the chain corresponds to 96 to 116 (HINPAVTFGLFLARKVSLPRA). The short motif at 98–100 (NPA) is the NPA 1 element. A helical transmembrane segment spans residues 117–137 (VAYMVAQCLGAICGVGLVKAF). The Extracellular segment spans residues 138-158 (MMTPYKRLGGGANTVADGYST). A helical transmembrane segment spans residues 159-179 (GTALGAEIIGTFVLVYTVFSA). The Cytoplasmic portion of the chain corresponds to 180-192 (TDPKRSARDSHVP). A helical transmembrane segment spans residues 193–213 (VLAPLPIGFAVFMVHLATIPI). The Extracellular portion of the chain corresponds to 214-240 (TGTGINPARSFGAAVIYNNEKAWDDHW). An NPA 2 motif is present at residues 219 to 221 (NPA). The helical transmembrane segment at 241–261 (IFWVGPFVGALAAAAYHQYIL) threads the bilayer. Over 262-278 (RAAAIKALASFRSNPTN) the chain is Cytoplasmic. Residues Ser-271 and Ser-274 each carry the phosphoserine modification.

The protein belongs to the MIP/aquaporin (TC 1.A.8) family. PIP (TC 1.A.8.11) subfamily. In terms of tissue distribution, expressed in roots and floral buds.

Its subcellular location is the cell membrane. Aquaporins facilitate the transport of water and small neutral solutes across cell membranes. The chain is Probable aquaporin PIP2-8 (PIP2-8) from Arabidopsis thaliana (Mouse-ear cress).